Reading from the N-terminus, the 405-residue chain is uncharacterized protein (405 aa).

13 helical membrane passes run 19-39, 48-68, 85-105, 106-126, 129-149, 156-176, 178-198, 224-244, 252-272, 283-303, 309-329, 344-364, and 366-386; these read IVSI…PLAV, MGFS…ATLL, IVVF…LADI, ASAW…ILGI, SFAG…LHIG, GIVT…CYAW, GLQG…LLAL, GMAL…ITLF, GAAF…LLFP, VAMI…TAAM, IGVL…GVVA, TYTV…GLVM, and WAGV…ALLL.

This sequence belongs to the major facilitator superfamily. YhhS family.

Its subcellular location is the cell inner membrane. This is an uncharacterized protein from Salmonella paratyphi C (strain RKS4594).